The sequence spans 1033 residues: PDZ domain-containing protein 7 (1033 aa).

PDZ domains are found at residues 86 to 168 (SVRV…RMGR) and 210 to 293 (IVHL…ETGR). Low complexity predominate over residues 323-344 (ESSSSVSSCASSAPYSSGSLPS). 4 disordered regions span residues 323–380 (ESSS…GGRV), 444–464 (KQQRKKEKSGSPGEKGALQRS), 754–864 (EPLS…KTVT), and 943–1033 (MELV…PRIP). A compositionally biased stretch (basic residues) spans 770–784 (AQSRSRSRSRSRSRS). Residues 785–797 (SRGQGKSPGRRSP) show a composition bias toward low complexity. Positions 862-934 (TVTLSKMKQS…QRAVDTIRRA (73 aa)) constitute a PDZ 3 domain. The segment covering 991-1000 (PEPPTNPQTP) has biased composition (pro residues).

As to quaternary structure, homodimerizes (via PDZ2 domain). Component of USH2 complex, composed of ADGRV1, PDZD7, USH2A and WHRN. Interacts (via PDZ domains) with WHRN; the interaction is direct. Interacts with USH1G. Interacts with ADGRV1 (via the cytoplasmic region). Interacts with USH2A (via the cytoplasmic region). Interacts with MYO7A (via MyTH4-FERM domains). In terms of tissue distribution, weakly expressed in the inner ear. Expressed in the retinal pigment epithelium.

It localises to the cell projection. The protein resides in the cilium. Its subcellular location is the nucleus. It is found in the stereocilium. Functionally, in cochlear developing hair cells, essential in organizing the USH2 complex at stereocilia ankle links. Blocks inhibition of adenylate cyclase activity mediated by ADGRV1. This chain is PDZ domain-containing protein 7, found in Homo sapiens (Human).